The chain runs to 119 residues: Methylglyoxal synthase (119 aa).

Positions 1–119 (MKIALIAHDK…ESAKLIMADI (119 aa)) constitute an MGS-like domain. Residues His8, Lys12, 34–37 (TGTT), and 54–55 (SG) contribute to the substrate site. The active-site Proton donor/acceptor is the Asp60. A substrate-binding site is contributed by His87.

It belongs to the methylglyoxal synthase family.

It carries out the reaction dihydroxyacetone phosphate = methylglyoxal + phosphate. In terms of biological role, catalyzes the formation of methylglyoxal from dihydroxyacetone phosphate. This Clostridium perfringens (strain ATCC 13124 / DSM 756 / JCM 1290 / NCIMB 6125 / NCTC 8237 / Type A) protein is Methylglyoxal synthase.